Here is a 191-residue protein sequence, read N- to C-terminus: Putative RNA-binding protein EEED8.4 (191 aa).

Positions 55-132 (KSVFIGNVDF…RPIVVTAKRT (78 aa)) constitute an RRM domain. A disordered region spans residues 136–160 (GMGHGVRGSSRGTFGRGRGAARGAP).

The polypeptide is Putative RNA-binding protein EEED8.4 (Caenorhabditis elegans).